The sequence spans 536 residues: Phosphoenolpyruvate carboxykinase (ATP) (536 aa).

Arg61, Tyr195, and Lys201 together coordinate substrate. Residues Lys201, His220, and 236-244 each bind ATP; that span reads GLSGTGKTT. Mn(2+) contacts are provided by Lys201 and His220. Residue Asp257 participates in Mn(2+) binding. Positions 285, 322, and 447 each coordinate ATP. Arg322 provides a ligand contact to substrate.

Belongs to the phosphoenolpyruvate carboxykinase (ATP) family. The cofactor is Mn(2+).

The protein localises to the cytoplasm. It carries out the reaction oxaloacetate + ATP = phosphoenolpyruvate + ADP + CO2. It functions in the pathway carbohydrate biosynthesis; gluconeogenesis. Functionally, involved in the gluconeogenesis. Catalyzes the conversion of oxaloacetate (OAA) to phosphoenolpyruvate (PEP) through direct phosphoryl transfer between the nucleoside triphosphate and OAA. This is Phosphoenolpyruvate carboxykinase (ATP) from Brucella melitensis biotype 1 (strain ATCC 23456 / CCUG 17765 / NCTC 10094 / 16M).